The primary structure comprises 134 residues: Small ribosomal subunit protein uS11 (134 aa).

Residues 1–24 are disordered; it reads MATKMAGVKRAGRKRKERKNIERG.

Belongs to the universal ribosomal protein uS11 family. Part of the 30S ribosomal subunit. Interacts with proteins S7 and S18. Binds to IF-3.

Its function is as follows. Located on the platform of the 30S subunit, it bridges several disparate RNA helices of the 16S rRNA. Forms part of the Shine-Dalgarno cleft in the 70S ribosome. The protein is Small ribosomal subunit protein uS11 of Acetivibrio thermocellus (strain ATCC 27405 / DSM 1237 / JCM 9322 / NBRC 103400 / NCIMB 10682 / NRRL B-4536 / VPI 7372) (Clostridium thermocellum).